The following is a 606-amino-acid chain: Scavenger receptor class A member 3 (606 aa).

Over 1-56 (MKVRSAGGDGDALCVTEEDLAGDDEDMPTFPCTQKGRPGPRCSRCQKNLSLHTSVR) the chain is Cytoplasmic. Residues 57–77 (ILYLFLALLLVAVAVLASLVF) traverse the membrane as a helical; Signal-anchor for type II membrane protein segment. Residues 78 to 606 (RKVDSLSEDI…PGPPGSQSFY (529 aa)) lie on the Extracellular side of the membrane. 10 N-linked (GlcNAc...) asparagine glycosylation sites follow: asparagine 115, asparagine 182, asparagine 224, asparagine 257, asparagine 313, asparagine 337, asparagine 365, asparagine 400, asparagine 430, and asparagine 451. Residues 454 to 606 (ILRGAPGPPG…PGPPGSQSFY (153 aa)) form a disordered region. The 59-residue stretch at 455 to 513 (LRGAPGPPGPRGFKGDMGVKGPVGGRGPKGDPGSLGPLGPQGPQGQPGEAGPVGERGPV) folds into the Collagen-like 1 domain. Residues 485-519 (DPGSLGPLGPQGPQGQPGEAGPVGERGPVGPRGFP) are compositionally biased toward low complexity. The segment covering 526–535 (GSFGTGGPRG) has biased composition (gly residues). In terms of domain architecture, Collagen-like 2 spans 544–603 (GPPGPEGPPGSPGPSGPQGKPGIAGKTGSPGQRGAMGPKGEPGIQGPPGLPGPPGPPGSQ). Pro residues-rich tracts occupy residues 545–558 (PPGP…PGPS) and 591–600 (PGLPGPPGPP).

In terms of tissue distribution, expressed ubiquitously.

The protein resides in the endoplasmic reticulum membrane. The protein localises to the golgi apparatus membrane. Its function is as follows. Seems to protect cells by scavenging oxidative molecules or harmful products of oxidation. This Homo sapiens (Human) protein is Scavenger receptor class A member 3 (SCARA3).